The chain runs to 426 residues: Putative glutamate--cysteine ligase 2 (426 aa).

This sequence belongs to the glutamate--cysteine ligase type 2 family. YbdK subfamily.

It carries out the reaction L-cysteine + L-glutamate + ATP = gamma-L-glutamyl-L-cysteine + ADP + phosphate + H(+). In terms of biological role, ATP-dependent carboxylate-amine ligase which exhibits weak glutamate--cysteine ligase activity. The polypeptide is Putative glutamate--cysteine ligase 2 (Bradyrhizobium diazoefficiens (strain JCM 10833 / BCRC 13528 / IAM 13628 / NBRC 14792 / USDA 110)).